The chain runs to 147 residues: Hemoglobin subunit beta (147 aa).

Positions 2–147 (DWTDAERAAI…VVSALGRQYH (146 aa)) constitute a Globin domain. Residues H63 and H92 each coordinate heme b.

This sequence belongs to the globin family. In terms of assembly, heterotetramer of two alpha chains and two beta chains. Red blood cells.

Involved in oxygen transport from gills to the various peripheral tissues. This is Hemoglobin subunit beta (hbb) from Leiostomus xanthurus (Spot).